The sequence spans 68 residues: ATP synthase protein 8 (68 aa).

Residues 8-24 (TWLTIITPTLLALFLIT) traverse the membrane as a helical segment. Lys54 is modified (N6-acetyllysine; alternate). Lys54 is modified (N6-succinyllysine; alternate). An N6-acetyllysine modification is found at Lys57.

Belongs to the ATPase protein 8 family. In terms of assembly, F-type ATPases have 2 components, CF(1) - the catalytic core - and CF(0) - the membrane proton channel. Component of an ATP synthase complex composed of ATP5PB, ATP5MC1, ATP5F1E, ATP5PD, ATP5ME, ATP5PF, ATP5MF, MT-ATP6, MT-ATP8, ATP5F1A, ATP5F1B, ATP5F1D, ATP5F1C, ATP5PO, ATP5MG, ATP5MK and ATP5MJ. Interacts with PRICKLE3.

Its subcellular location is the mitochondrion membrane. Its function is as follows. Mitochondrial membrane ATP synthase (F(1)F(0) ATP synthase or Complex V) produces ATP from ADP in the presence of a proton gradient across the membrane which is generated by electron transport complexes of the respiratory chain. F-type ATPases consist of two structural domains, F(1) - containing the extramembraneous catalytic core and F(0) - containing the membrane proton channel, linked together by a central stalk and a peripheral stalk. During catalysis, ATP synthesis in the catalytic domain of F(1) is coupled via a rotary mechanism of the central stalk subunits to proton translocation. Part of the complex F(0) domain. Minor subunit located with subunit a in the membrane. In Pongo pygmaeus (Bornean orangutan), this protein is ATP synthase protein 8 (MT-ATP8).